The primary structure comprises 555 residues: Glutamine--tRNA ligase (555 aa).

The 'HIGH' region motif lies at 34–44 (PEPNGYLHIGH). ATP-binding positions include 35–37 (EPN) and 41–47 (HIGHAKS). Asp-67 and Tyr-212 together coordinate L-glutamine. Residues Thr-231, 261–262 (RL), and 269–271 (MSK) contribute to the ATP site. The short motif at 268 to 272 (VMSKR) is the 'KMSKS' region element. The segment at 317 to 324 (TKQDNTIE) is interaction with tRNA.

Belongs to the class-I aminoacyl-tRNA synthetase family. Monomer.

The protein localises to the cytoplasm. The enzyme catalyses tRNA(Gln) + L-glutamine + ATP = L-glutaminyl-tRNA(Gln) + AMP + diphosphate. The protein is Glutamine--tRNA ligase of Salmonella choleraesuis (strain SC-B67).